Here is a 320-residue protein sequence, read N- to C-terminus: Cytochrome f (320 aa).

The N-terminal stretch at 1–35 (MQTRNTFSWIREEITRSISVSLMIYIITWASISSA) is a signal peptide. Heme is bound by residues Tyr-36, Cys-56, Cys-59, and His-60. Residues 286–306 (VQGLLFFLGSVVLAQIFLVLK) traverse the membrane as a helical segment.

Belongs to the cytochrome f family. As to quaternary structure, the 4 large subunits of the cytochrome b6-f complex are cytochrome b6, subunit IV (17 kDa polypeptide, petD), cytochrome f and the Rieske protein, while the 4 small subunits are PetG, PetL, PetM and PetN. The complex functions as a dimer. Heme serves as cofactor.

It localises to the plastid. The protein localises to the chloroplast thylakoid membrane. Functionally, component of the cytochrome b6-f complex, which mediates electron transfer between photosystem II (PSII) and photosystem I (PSI), cyclic electron flow around PSI, and state transitions. In Lepidium virginicum (Virginia pepperweed), this protein is Cytochrome f.